Consider the following 764-residue polypeptide: Phosphoribosylformylglycinamidine synthase subunit PurL (764 aa).

The tract at residues M1–E23 is disordered. H57 is a catalytic residue. 2 residues coordinate ATP: Y60 and K104. E106 lines the Mg(2+) pocket. Substrate contacts are provided by residues S107–H110 and R129. The Proton acceptor role is filled by H108. D130 serves as a coordination point for Mg(2+). Q258 contacts substrate. Mg(2+) is bound at residue D286. E330–Q332 lines the substrate pocket. ATP is bound by residues N518 and G555. N556 contributes to the Mg(2+) binding site. A substrate-binding site is contributed by S558.

The protein belongs to the FGAMS family. Monomer. Part of the FGAM synthase complex composed of 1 PurL, 1 PurQ and 2 PurS subunits.

It is found in the cytoplasm. The catalysed reaction is N(2)-formyl-N(1)-(5-phospho-beta-D-ribosyl)glycinamide + L-glutamine + ATP + H2O = 2-formamido-N(1)-(5-O-phospho-beta-D-ribosyl)acetamidine + L-glutamate + ADP + phosphate + H(+). It functions in the pathway purine metabolism; IMP biosynthesis via de novo pathway; 5-amino-1-(5-phospho-D-ribosyl)imidazole from N(2)-formyl-N(1)-(5-phospho-D-ribosyl)glycinamide: step 1/2. Functionally, part of the phosphoribosylformylglycinamidine synthase complex involved in the purines biosynthetic pathway. Catalyzes the ATP-dependent conversion of formylglycinamide ribonucleotide (FGAR) and glutamine to yield formylglycinamidine ribonucleotide (FGAM) and glutamate. The FGAM synthase complex is composed of three subunits. PurQ produces an ammonia molecule by converting glutamine to glutamate. PurL transfers the ammonia molecule to FGAR to form FGAM in an ATP-dependent manner. PurS interacts with PurQ and PurL and is thought to assist in the transfer of the ammonia molecule from PurQ to PurL. The polypeptide is Phosphoribosylformylglycinamidine synthase subunit PurL (Mycolicibacterium vanbaalenii (strain DSM 7251 / JCM 13017 / BCRC 16820 / KCTC 9966 / NRRL B-24157 / PYR-1) (Mycobacterium vanbaalenii)).